A 296-amino-acid chain; its full sequence is MSTRQLRGSAVALVTPFHKDLTVDVEALIRLVEFHLEAGTDIIIPCGTTGESPTLTEAEQASIIRTVRDASKGRIIVGAGAGTNATVEAVRLAKNAEAAGAEAILSVAPYYNKPSQEGIYQHYRHVAEAVSVPIIIYNVPGRTGCNVDAATVLRLARDFANITAVKEATDNMQQIAELLDGRPEGFSVLTGEDPLILPFMAMGGDGVISVAANQIPGAIKRLVDSVSEGNLEEARKINRKYRRLLRLNFIESNPVPVKYALTRMGMLEETYRLPLVPLSAASKAEMDRELEILGLI.

Thr49 contacts pyruvate. Residue Tyr137 is the Proton donor/acceptor of the active site. The Schiff-base intermediate with substrate role is filled by Lys166. Ile208 lines the pyruvate pocket.

This sequence belongs to the DapA family. As to quaternary structure, homotetramer; dimer of dimers.

Its subcellular location is the cytoplasm. It catalyses the reaction L-aspartate 4-semialdehyde + pyruvate = (2S,4S)-4-hydroxy-2,3,4,5-tetrahydrodipicolinate + H2O + H(+). The protein operates within amino-acid biosynthesis; L-lysine biosynthesis via DAP pathway; (S)-tetrahydrodipicolinate from L-aspartate: step 3/4. Its function is as follows. Catalyzes the condensation of (S)-aspartate-beta-semialdehyde [(S)-ASA] and pyruvate to 4-hydroxy-tetrahydrodipicolinate (HTPA). In Chlorobium luteolum (strain DSM 273 / BCRC 81028 / 2530) (Pelodictyon luteolum), this protein is 4-hydroxy-tetrahydrodipicolinate synthase.